A 158-amino-acid polypeptide reads, in one-letter code: Ribosomal RNA large subunit methyltransferase H (158 aa).

S-adenosyl-L-methionine is bound by residues L76, G107, and L126 to M131.

The protein belongs to the RNA methyltransferase RlmH family. In terms of assembly, homodimer.

It localises to the cytoplasm. The enzyme catalyses pseudouridine(1915) in 23S rRNA + S-adenosyl-L-methionine = N(3)-methylpseudouridine(1915) in 23S rRNA + S-adenosyl-L-homocysteine + H(+). In terms of biological role, specifically methylates the pseudouridine at position 1915 (m3Psi1915) in 23S rRNA. The chain is Ribosomal RNA large subunit methyltransferase H from Teredinibacter turnerae (strain ATCC 39867 / T7901).